The following is a 504-amino-acid chain: Maturase K (504 aa).

The protein belongs to the intron maturase 2 family. MatK subfamily.

It localises to the plastid. It is found in the chloroplast. Its function is as follows. Usually encoded in the trnK tRNA gene intron. Probably assists in splicing its own and other chloroplast group II introns. The polypeptide is Maturase K (Quercus robur (English oak)).